We begin with the raw amino-acid sequence, 433 residues long: T-box transcription factor T (433 aa).

A DNA-binding region (T-box) is located at residues 49–217; it reads LWLRFKELTN…YNPFAKAFLD (169 aa).

As to quaternary structure, monomer. Binds DNA as a monomer.

It is found in the nucleus. Functionally, involved in the transcriptional regulation of genes required for mesoderm formation and differentiation. Binds to a palindromic site (called T site) and activates gene transcription when bound to such a site. In Gallus gallus (Chicken), this protein is T-box transcription factor T.